We begin with the raw amino-acid sequence, 302 residues long: Phosphoribosylaminoimidazole-succinocarboxamide synthase (302 aa).

This sequence belongs to the SAICAR synthetase family.

The enzyme catalyses 5-amino-1-(5-phospho-D-ribosyl)imidazole-4-carboxylate + L-aspartate + ATP = (2S)-2-[5-amino-1-(5-phospho-beta-D-ribosyl)imidazole-4-carboxamido]succinate + ADP + phosphate + 2 H(+). It functions in the pathway purine metabolism; IMP biosynthesis via de novo pathway; 5-amino-1-(5-phospho-D-ribosyl)imidazole-4-carboxamide from 5-amino-1-(5-phospho-D-ribosyl)imidazole-4-carboxylate: step 1/2. This Cupriavidus taiwanensis (strain DSM 17343 / BCRC 17206 / CCUG 44338 / CIP 107171 / LMG 19424 / R1) (Ralstonia taiwanensis (strain LMG 19424)) protein is Phosphoribosylaminoimidazole-succinocarboxamide synthase.